The chain runs to 59 residues: Large ribosomal subunit protein bL33 (59 aa).

The protein belongs to the bacterial ribosomal protein bL33 family.

The sequence is that of Large ribosomal subunit protein bL33 from Borrelia recurrentis (strain A1).